Here is a 256-residue protein sequence, read N- to C-terminus: Hydroxyacylglutathione hydrolase (256 aa).

Positions 53, 55, 57, 58, 113, 130, and 168 each coordinate Zn(2+).

This sequence belongs to the metallo-beta-lactamase superfamily. Glyoxalase II family. As to quaternary structure, monomer. It depends on Zn(2+) as a cofactor.

The catalysed reaction is an S-(2-hydroxyacyl)glutathione + H2O = a 2-hydroxy carboxylate + glutathione + H(+). The protein operates within secondary metabolite metabolism; methylglyoxal degradation; (R)-lactate from methylglyoxal: step 2/2. Functionally, thiolesterase that catalyzes the hydrolysis of S-D-lactoyl-glutathione to form glutathione and D-lactic acid. The chain is Hydroxyacylglutathione hydrolase from Tolumonas auensis (strain DSM 9187 / NBRC 110442 / TA 4).